Here is a 335-residue protein sequence, read N- to C-terminus: Nucleoid-associated protein KPN78578_25800 (335 aa).

Belongs to the YejK family.

The protein localises to the cytoplasm. It is found in the nucleoid. The polypeptide is Nucleoid-associated protein KPN78578_25800 (Klebsiella pneumoniae subsp. pneumoniae (strain ATCC 700721 / MGH 78578)).